Consider the following 547-residue polypeptide: MRVNLLITMIIFALIWPVTALRAAVSKTTWADAPAREFVFVENNSDDNFFVTPGGALDPRLTGANRWTGLKYTGSGTIYQQSLGYIDNGYNTGLYTNWKFDMWLENSPVSSPLTGLRCINWYAGCNMTTSLILPQTTDASGFYGATVTSGGAKWMHGMLSDAFYQYMQQMPVGSSFTMTINACQTSVNYDASSGARCKDQASGNWYVRNVTHTKAANLRLINTHSLAEVFINSDGVPTLGEGNADCRTQTIGSRSGLSCKMVNYTLQTNGLSNTSIHIFPAIANSSLASAVGAYDMQFSLNGSSWKPVSNTAYYYTFNEMKSADSIYVFFSSNFFKQMVNLGISDINTKDLFNFRFQNTTSPESGWYEFSTSNTLIIKPRDFSISIISDEYTQTPSREGYVGSGESALDFGYIVTTSGKTAADEVLIKVTGPAQVIGGRSYCVFSSDDGKAKVPFPATLSFITRNGATKTYDAGCDDSWRDMTDALWLTTPWTDISGEVGQMDKTTVKFSIPMDNAISLRTVDDNGWFGEVSASGEIHVQATWRNIN.

The signal sequence occupies residues 1-23 (MRVNLLITMIIFALIWPVTALRA).

Belongs to the EcpD/MatE family. Forms polymers. Interacts with EcpA.

It localises to the fimbrium. In terms of biological role, part of the ecpRABCDE operon, which encodes the E.coli common pilus (ECP). ECP is found in both commensal and pathogenic strains and plays a dual role in early-stage biofilm development and host cell recognition. Tip pilus adhesin, which is required for assembly of EcpA into fibers. The polypeptide is Fimbria adhesin EcpD (ecpD) (Escherichia coli (strain K12)).